The sequence spans 240 residues: Large ribosomal subunit protein uL1 (240 aa).

Belongs to the universal ribosomal protein uL1 family. Part of the 50S ribosomal subunit.

In terms of biological role, binds directly to 23S rRNA. The L1 stalk is quite mobile in the ribosome, and is involved in E site tRNA release. Functionally, protein L1 is also a translational repressor protein, it controls the translation of the L11 operon by binding to its mRNA. The protein is Large ribosomal subunit protein uL1 of Nocardioides sp. (strain ATCC BAA-499 / JS614).